Reading from the N-terminus, the 151-residue chain is Large ribosomal subunit protein bL9 (151 aa).

It belongs to the bacterial ribosomal protein bL9 family.

Binds to the 23S rRNA. The chain is Large ribosomal subunit protein bL9 from Rhodococcus erythropolis (strain PR4 / NBRC 100887).